We begin with the raw amino-acid sequence, 57 residues long: Large ribosomal subunit protein bL32 (57 aa).

The protein belongs to the bacterial ribosomal protein bL32 family.

In Ureaplasma parvum serovar 3 (strain ATCC 27815 / 27 / NCTC 11736), this protein is Large ribosomal subunit protein bL32.